Consider the following 385-residue polypeptide: MTAISLGMPAVPTKLADRRVSRQIQVGTVAVGGDAPVSVQSMTTTRTSDIGATLQQIAELTASGCQIVRVACPTQDDADALATIARKSQIPVIADIHFQPKYVFAAIDAGCAAVRVNPGNIKQFDDKVKEIAKAASETRTPIRIGVNAGSLDARLLKKYGKATPEALVESALWEASLFEEHGFGDIKISVKHNDPVVMVNAYRQLAAQSDYPLHLGVTEAGPAFQGTIKSAVAFGALLSEGIGDTIRVSLSAPPAEEVKVGLQILEALNLKQRRLEIVSCPSCGRAQVDVYKLADQVSAGLEGMEVPLRVAVMGCVVNGPGEAREADLGVASGNGKGQIFVKGEVIKTVPESKIVETLIEEALKIAEQMEKDGIASGEPQVSIGA.

[4Fe-4S] cluster is bound by residues Cys-280, Cys-283, Cys-315, and Glu-322.

The protein belongs to the IspG family. [4Fe-4S] cluster serves as cofactor.

It catalyses the reaction (2E)-4-hydroxy-3-methylbut-2-enyl diphosphate + oxidized [flavodoxin] + H2O + 2 H(+) = 2-C-methyl-D-erythritol 2,4-cyclic diphosphate + reduced [flavodoxin]. Its pathway is isoprenoid biosynthesis; isopentenyl diphosphate biosynthesis via DXP pathway; isopentenyl diphosphate from 1-deoxy-D-xylulose 5-phosphate: step 5/6. Converts 2C-methyl-D-erythritol 2,4-cyclodiphosphate (ME-2,4cPP) into 1-hydroxy-2-methyl-2-(E)-butenyl 4-diphosphate. In Streptomyces griseus subsp. griseus (strain JCM 4626 / CBS 651.72 / NBRC 13350 / KCC S-0626 / ISP 5235), this protein is 4-hydroxy-3-methylbut-2-en-1-yl diphosphate synthase (flavodoxin).